Reading from the N-terminus, the 803-residue chain is Ubiquitin carboxyl-terminal hydrolase 45 (803 aa).

Residues 1–34 form a disordered region; it reads MRLKDPFSLKTADMTKRSNKPKKPRDEDSSDEVG. The UBP-type zinc finger occupies 36–153; the sequence is LTCQHVSRAV…QTLDFLQKQS (118 aa). Positions 38, 40, 62, 65, 85, 88, 93, 100, 104, 113, 126, and 129 each coordinate Zn(2+). The USP domain maps to 192-802; it reads KGINNLGNTC…QAYLLFYEEL (611 aa). Cys-201 acts as the Nucleophile in catalysis. The disordered stretch occupies residues 394-554; it reads PTNPARLGKS…LPSIRPQQGG (161 aa). A compositionally biased stretch (basic and acidic residues) spans 403 to 417; that stretch reads SGREQDSLTSHDDSL. 2 stretches are compositionally biased toward polar residues: residues 419 to 440 and 469 to 480; these read AHSQ…SRHS and SYRTDTMGSQSD. The segment covering 502-531 has biased composition (low complexity); sequence SEWSPRIPSVSSHSSTSDKTSITTTLSTTT. Residues 532-545 are compositionally biased toward polar residues; it reads HNPSLKSNPSSTPL. His-739 serves as the catalytic Proton acceptor.

It belongs to the peptidase C19 family. As to expression, retina.

It localises to the photoreceptor inner segment. Its subcellular location is the cytoplasm. It is found in the nucleus. It catalyses the reaction Thiol-dependent hydrolysis of ester, thioester, amide, peptide and isopeptide bonds formed by the C-terminal Gly of ubiquitin (a 76-residue protein attached to proteins as an intracellular targeting signal).. Its function is as follows. Catalyzes the deubiquitination of SPDL1. Plays a role in the repair of UV-induced DNA damage via deubiquitination of ERCC1, promoting its recruitment to DNA damage sites. May be involved in the maintenance of photoreceptor function. May play a role in normal retinal development. The polypeptide is Ubiquitin carboxyl-terminal hydrolase 45 (Danio rerio (Zebrafish)).